Reading from the N-terminus, the 110-residue chain is Large ribosomal subunit protein P2 (110 aa).

S59 bears the O-(pantetheine 4'-phosphoryl)serine; in acyl carrier protein form mark. A disordered region spans residues 62-110 (LASVPSGGAAPAAAAGGAAAGGAAEEKAEDKPAEKDEESDDDMGFGLFD). Over residues 63-84 (ASVPSGGAAPAAAAGGAAAGGA) the composition is skewed to low complexity. Positions 85–95 (AEEKAEDKPAE) are enriched in basic and acidic residues. Residue S100 is modified to Phosphoserine; in ribosomal stalk form.

The protein belongs to the eukaryotic ribosomal protein P1/P2 family. As to quaternary structure, the phosphorylated form is part of the ribosomal stalk involved in the interaction of the elongation factors with the ribosome during protein synthesis. The phosphopantetheinylated form is part of the 10S triacylglycerol biosynthetic complex involved in de novo fatty acid biosynthesis. In terms of processing, 4'-phosphopantetheine is transferred from CoA to a specific serine by acpS. This modification is essential for activity because fatty acids are bound in thioester linkage to the sulfhydryl of the prosthetic group.

It is found in the cytoplasm. Its function is as follows. Probable bifunctional protein. The phosphorylated protein plays an important role in the elongation step of protein synthesis. The phosphopantetheinylated protein acts as an acyl carrier protein. This Rhodotorula glutinis (Yeast) protein is Large ribosomal subunit protein P2.